The primary structure comprises 237 residues: Uridylate kinase (237 aa).

Position 9-12 (Lys-9–Gly-12) interacts with ATP. Residue Gly-51 participates in UMP binding. 2 residues coordinate ATP: Gly-52 and Arg-56. Residues Asp-71 and Cys-132 to Thr-139 contribute to the UMP site. Thr-159, Tyr-165, and Asp-168 together coordinate ATP.

Belongs to the UMP kinase family. Homohexamer.

The protein localises to the cytoplasm. It catalyses the reaction UMP + ATP = UDP + ADP. It participates in pyrimidine metabolism; CTP biosynthesis via de novo pathway; UDP from UMP (UMPK route): step 1/1. With respect to regulation, inhibited by UTP. Functionally, catalyzes the reversible phosphorylation of UMP to UDP. In Prochlorococcus marinus (strain SARG / CCMP1375 / SS120), this protein is Uridylate kinase.